A 487-amino-acid polypeptide reads, in one-letter code: Calcium-dependent mitochondrial ATP-magnesium/phosphate carrier protein 2 (487 aa).

Over 1–211 (MEATKSSKQN…ISKHIKRSNY (211 aa)) the chain is Mitochondrial intermembrane. 4 EF-hand domains span residues 36 to 71 (ERDLRIRSLFSFFDSENVGYLDCAQIEKGLCALQIP), 72 to 107 (SGYKYAKELFRVCDANRDGRVDYHEFRRYMDDKELE), 108 to 138 (LYRIFQAIDVEHNGCISPEGLWDSLVKAGIE), and 139 to 174 (IKDEELARFVEHVDKDNDGIIMFEEWRDFLLLYPHE). 5 residues coordinate Ca(2+): D85, N87, D89, R91, and E96. Ca(2+) is bound by residues D152, D154, D156, and E163. 3 Solcar repeats span residues 206-289 (IKRS…FKNA), 301-389 (IGTT…LKDL), and 400-483 (PGPL…MKKS). A helical transmembrane segment spans residues 212–229 (FIAGGIAGAASRTATAPL). The Mitochondrial matrix portion of the chain corresponds to 230-263 (DRLKVLLQIQKTDARIREAIKLIWKQGGVRGFFR). Residues 264–283 (GNGLNIVKVAPESAIKFYAY) form a helical membrane-spanning segment. The Mitochondrial intermembrane segment spans residues 284–310 (ELFKNAIGENMGEDKADIGTTVRLFAG). A helical transmembrane segment spans residues 311-324 (GMAGAVAQASIYPL). Over 325–363 (DLVKTRLQTYTSQAGVAVPRLGTLTKDILVHEGPRAFYK) the chain is Mitochondrial matrix. A helical transmembrane segment spans residues 364 to 383 (GLFPSLLGIIPYAGIDLAAY). Over 384–405 (ETLKDLSRTYILQDAEPGPLVQ) the chain is Mitochondrial intermembrane. Residues 406–423 (LGCGTISGALGATCVYPL) traverse the membrane as a helical segment. The Mitochondrial matrix portion of the chain corresponds to 424–457 (QVVRTRMQAERARTSMSGVFRRTISEEGYRALYK). A helical membrane pass occupies residues 458–477 (GLLPNLLKVVPAASITYMVY). Topologically, residues 478–487 (EAMKKSLELD) are mitochondrial intermembrane.

The protein belongs to the mitochondrial carrier (TC 2.A.29) family. As to expression, expressed in flowers, leaves, stems, roots and seedlings, mostly in aerial parts.

The protein resides in the mitochondrion inner membrane. With respect to regulation, counter-exchange transport activity is saturable and inhibited by pyridoxal-5'-phosphate, EDTA and EGTA. Activated by calcium Ca(2+) and manganese Mn(2+) ions, and slightly by iron Fe(2+) and zinc Zn(2+) ions. Repressed by copper ions Cu(2+) and slightly by magnesium Mg(2+) ions. Magnesium Mg(2+) ions promotes slightly ATP uptake, ATP-Mg(2+) being exchanged with ATP(4-). Calcium-dependent mitochondrial carrier protein that catalyzes the import of ATP co-transported with metal divalent cations across the mitochondrial inner membrane in exchange for phosphate (Pi). Can transport phosphate, AMP, ADP, ATP, adenosine 5'-phosphosulfate, sulfate and thiosulfate, and, to a lesser extent, other nucleotides. Binds calcium ions Ca(2+). Also mediates calcium uptake. The sequence is that of Calcium-dependent mitochondrial ATP-magnesium/phosphate carrier protein 2 from Arabidopsis thaliana (Mouse-ear cress).